Consider the following 305-residue polypeptide: Undecaprenyl-diphosphatase (305 aa).

Helical transmembrane passes span 18–38 (GVTELFPVSSLGHAVLVPALV), 55–75 (YLAFIVGLHVATAAALLVFFW), 103–123 (WLIVVGTIPVGLAGLALEQLF), 130–150 (PVPAAAFLLLNGVALYAGEVL), 187–207 (GVLIGAAQILALLPGISRSGI), 225–245 (FSFLLATPIILAAGVYKIPEL), 246–266 (FGPLGAGIGGQVLAGSIASFV), and 284–304 (LTPFAIYCAVAGGASLVWLAL).

It belongs to the UppP family.

It is found in the cell membrane. It carries out the reaction di-trans,octa-cis-undecaprenyl diphosphate + H2O = di-trans,octa-cis-undecaprenyl phosphate + phosphate + H(+). Functionally, catalyzes the dephosphorylation of undecaprenyl diphosphate (UPP). Confers resistance to bacitracin. In Mycolicibacterium paratuberculosis (strain ATCC BAA-968 / K-10) (Mycobacterium paratuberculosis), this protein is Undecaprenyl-diphosphatase.